We begin with the raw amino-acid sequence, 406 residues long: Tyrosine--tRNA ligase (406 aa).

Tyr35 lines the L-tyrosine pocket. The short motif at 40 to 49 is the 'HIGH' region element; sequence PTADSLHIGH. Residues Tyr168 and Gln172 each contribute to the L-tyrosine site. The short motif at 228–232 is the 'KMSKS' region element; it reads KMGKT. Lys231 contributes to the ATP binding site. In terms of domain architecture, S4 RNA-binding spans 340–406; sequence CSVVELLVDI…KKNYNRIIIK (67 aa).

It belongs to the class-I aminoacyl-tRNA synthetase family. TyrS type 1 subfamily. Homodimer.

The protein localises to the cytoplasm. The enzyme catalyses tRNA(Tyr) + L-tyrosine + ATP = L-tyrosyl-tRNA(Tyr) + AMP + diphosphate + H(+). Its function is as follows. Catalyzes the attachment of tyrosine to tRNA(Tyr) in a two-step reaction: tyrosine is first activated by ATP to form Tyr-AMP and then transferred to the acceptor end of tRNA(Tyr). The sequence is that of Tyrosine--tRNA ligase from Clostridium kluyveri (strain NBRC 12016).